A 488-amino-acid chain; its full sequence is MQYRDLRDFIRGLEQRGELKRIQVPISPVLEMTEVCDRTLRAKGPALLFEKPTGFDIPVLGNLFGTPERVAMGMGAESVEELREIGKLLAFLKEPEPPKGLKDAWSKLPIFKKVVSMAPKVVKDAVCQEVVVEGDDVDLGQLPIQHCWPGDVAPLITWGLTVTRGPNKDRQNLGIYRQQVIGRNKVIMRWLSHRGGALDYREWCEKNPGQPFPVAVALGADPATILGAVTPVPDTLSEYAFAGLLRGNRTELVKCRGSNLQVPATAEIILEGVIHPGEMAPEGPYGDHTGYYNEVDSFPVFTVERITHRQKPIYHSTYTGRPPDEPAILGVALNEVFVPILQKQFPEIVDFYLPPEGCSYRMAVVTMKKQYPGHAKRVMLGVWSFLRQFMYTKFVIVTDDDINARDWNDVIWAITTRMDPKRDTVMIDNTPIDYLDFASPVSGLGSKMGLDATHKWPGETTREWGRVIVKDEAVTRRIDELWDQLGID.

Residue N172 participates in Mn(2+) binding. Prenylated FMN-binding positions include 175 to 177 (IYR), 189 to 191 (RWL), and 194 to 195 (RG). E238 is a binding site for Mn(2+). D287 (proton donor) is an active-site residue.

It belongs to the UbiD family. In terms of assembly, homohexamer. Prenylated FMN serves as cofactor. The cofactor is Mn(2+).

The protein resides in the cell membrane. The enzyme catalyses a 4-hydroxy-3-(all-trans-polyprenyl)benzoate + H(+) = a 2-(all-trans-polyprenyl)phenol + CO2. It participates in cofactor biosynthesis; ubiquinone biosynthesis. In terms of biological role, catalyzes the decarboxylation of 3-octaprenyl-4-hydroxy benzoate to 2-octaprenylphenol, an intermediate step in ubiquinone biosynthesis. This chain is 3-octaprenyl-4-hydroxybenzoate carboxy-lyase, found in Pseudomonas putida (strain W619).